A 434-amino-acid polypeptide reads, in one-letter code: tRNA dimethylallyltransferase (434 aa).

10 to 17 (GTTGAGKS) contributes to the ATP binding site. 12–17 (TGAGKS) is a substrate binding site. 2 interaction with substrate tRNA regions span residues 35–38 (DSMQ) and 166–170 (RKIRR). The segment at 211–233 (SLVLMPRLDKRVDKMLSHGLVDE) is interaction with isopentenylpyrophosphate transferase. Interaction with substrate tRNA regions lie at residues 256–258 (QCI), 281–299 (RMKV…WIQS), and 291–298 (KSQKKWIQ). Residues 380–416 (FVCEECLDKRGDPFTVIGEDAFNVHIKSRKHKTTVRR) form a Matrin-type zinc finger.

Belongs to the IPP transferase family.

The protein resides in the mitochondrion. The protein localises to the cytoplasm. It localises to the nucleus. The enzyme catalyses adenosine(37) in tRNA + dimethylallyl diphosphate = N(6)-dimethylallyladenosine(37) in tRNA + diphosphate. Its function is as follows. Catalyzes the transfer of a dimethylallyl group onto the adenine at position 37 of both cytosolic and mitochondrial tRNAs, leading to the formation of N6-(dimethylallyl)adenosine (i(6)A). The sequence is that of tRNA dimethylallyltransferase (tit1) from Schizosaccharomyces pombe (strain 972 / ATCC 24843) (Fission yeast).